A 106-amino-acid chain; its full sequence is Transcription factor TRY (106 aa).

The 38-residue stretch at 34–71 (TEQEEDLIFRMYRLVGDRWDLIAGRVPGRQPEEIERYW) folds into the Myb-like domain. A disordered region spans residues 83–106 (RRQLHSSSHKHTKPHRPRFSIYPS). Residues 84 to 100 (RQLHSSSHKHTKPHRPR) show a composition bias toward basic residues.

As to quaternary structure, interacts with GL3 and thus prevents GL1 GL3 interaction. Also interacts with BHLH2. In terms of tissue distribution, expressed in roots, leaves, siliques and inflorescences.

It is found in the nucleus. Functionally, transcription factor. Involved in epidermal cell fate specification. Negative regulator of trichome development, including endoreplication, by lateral inhibition involving intercellular interactions. Promotes the formation of hair developing cells (trichoblasts) in H position in root epidermis, probably by inhibiting non-hair cell (atrichoblasts) formation. This is Transcription factor TRY (TRY) from Arabidopsis thaliana (Mouse-ear cress).